Reading from the N-terminus, the 196-residue chain is ATP-dependent Clp protease proteolytic subunit (196 aa).

Serine 98 (nucleophile) is an active-site residue. Histidine 123 is a catalytic residue.

The protein belongs to the peptidase S14 family. Fourteen ClpP subunits assemble into 2 heptameric rings which stack back to back to give a disk-like structure with a central cavity, resembling the structure of eukaryotic proteasomes.

The protein resides in the cytoplasm. The enzyme catalyses Hydrolysis of proteins to small peptides in the presence of ATP and magnesium. alpha-casein is the usual test substrate. In the absence of ATP, only oligopeptides shorter than five residues are hydrolyzed (such as succinyl-Leu-Tyr-|-NHMec, and Leu-Tyr-Leu-|-Tyr-Trp, in which cleavage of the -Tyr-|-Leu- and -Tyr-|-Trp bonds also occurs).. Its function is as follows. Cleaves peptides in various proteins in a process that requires ATP hydrolysis. Has a chymotrypsin-like activity. Plays a major role in the degradation of misfolded proteins. This Geobacillus thermodenitrificans (strain NG80-2) protein is ATP-dependent Clp protease proteolytic subunit.